Here is a 524-residue protein sequence, read N- to C-terminus: Cytochrome P450 4F3 (524 aa).

A helical membrane pass occupies residues 19-39; it reads WLLLLLAGASCLLAYILTPIY. C468 contributes to the heme binding site.

The protein belongs to the cytochrome P450 family. Heme is required as a cofactor. In terms of tissue distribution, highest level in polymorphonuclear leukocytes and dendritic cells. Detectable in lymph nodes, spleen, bone marrow and peripheral blood. Highly expressed in ovary. Very low level in liver, kidney, and smooth muscle. Expressed in neutrophils (at protein level).

Its subcellular location is the endoplasmic reticulum membrane. It is found in the microsome membrane. The enzyme catalyses leukotriene B4 + reduced [NADPH--hemoprotein reductase] + O2 = 18-hydroxy-leukotriene B4 + oxidized [NADPH--hemoprotein reductase] + H2O + H(+). The catalysed reaction is leukotriene B4 + reduced [NADPH--hemoprotein reductase] + O2 = 19-hydroxy-leukotriene B4 + oxidized [NADPH--hemoprotein reductase] + H2O + H(+). Its pathway is lipid metabolism; leukotriene B4 degradation. Functionally, a cytochrome P450 monooxygenase involved in the metabolism of the pro-inflammatory lipid mediator leukotriene B4 (LTB4). Hydroxylates at the omega-1 and omega-2 positions LTB4. This oxidation step leads to LTB4 inactivation, which is postulated to be a crucial part of the resolution of inflammation. Mechanistically, uses molecular oxygen inserting one oxygen atom into a substrate, and reducing the second into a water molecule, with two electrons provided by NADPH via cytochrome P450 reductase (CPR; NADPH-ferrihemoprotein reductase). The sequence is that of Cytochrome P450 4F3 from Mus musculus (Mouse).